Here is a 345-residue protein sequence, read N- to C-terminus: Anthranilate phosphoribosyltransferase (345 aa).

5-phospho-alpha-D-ribose 1-diphosphate-binding positions include glycine 80, 83-84 (GD), threonine 88, 90-93 (NIST), 108-116 (KHGNRSVSS), and serine 120. Glycine 80 lines the anthranilate pocket. Serine 92 provides a ligand contact to Mg(2+). Asparagine 111 lines the anthranilate pocket. Arginine 166 contributes to the anthranilate binding site. Residues aspartate 225 and glutamate 226 each coordinate Mg(2+).

Belongs to the anthranilate phosphoribosyltransferase family. As to quaternary structure, homodimer. The cofactor is Mg(2+).

The catalysed reaction is N-(5-phospho-beta-D-ribosyl)anthranilate + diphosphate = 5-phospho-alpha-D-ribose 1-diphosphate + anthranilate. It functions in the pathway amino-acid biosynthesis; L-tryptophan biosynthesis; L-tryptophan from chorismate: step 2/5. Functionally, catalyzes the transfer of the phosphoribosyl group of 5-phosphorylribose-1-pyrophosphate (PRPP) to anthranilate to yield N-(5'-phosphoribosyl)-anthranilate (PRA). This chain is Anthranilate phosphoribosyltransferase, found in Acetivibrio thermocellus (strain ATCC 27405 / DSM 1237 / JCM 9322 / NBRC 103400 / NCIMB 10682 / NRRL B-4536 / VPI 7372) (Clostridium thermocellum).